A 287-amino-acid polypeptide reads, in one-letter code: ATP synthase gamma chain (287 aa).

This sequence belongs to the ATPase gamma chain family. As to quaternary structure, F-type ATPases have 2 components, CF(1) - the catalytic core - and CF(0) - the membrane proton channel. CF(1) has five subunits: alpha(3), beta(3), gamma(1), delta(1), epsilon(1). CF(0) has three main subunits: a, b and c.

The protein resides in the cell inner membrane. Functionally, produces ATP from ADP in the presence of a proton gradient across the membrane. The gamma chain is believed to be important in regulating ATPase activity and the flow of protons through the CF(0) complex. This is ATP synthase gamma chain from Yersinia enterocolitica serotype O:8 / biotype 1B (strain NCTC 13174 / 8081).